Reading from the N-terminus, the 181-residue chain is UPF0397 protein str0306 (181 aa).

5 consecutive transmembrane segments (helical) span residues 11 to 31 (ATGI…IPIF), 45 to 65 (LFSV…GHAL), 72 to 92 (GNIS…IGLF), 109 to 129 (IWFN…VTPI), and 147 to 167 (FVAG…LLAI).

This sequence belongs to the UPF0397 family.

It is found in the cell membrane. The polypeptide is UPF0397 protein str0306 (Streptococcus thermophilus (strain CNRZ 1066)).